The sequence spans 524 residues: MGCSQSSNVKDFKTRRSKFTNGNNYGKSGNNKNSEDLAINPGMYVRKKEGKIGESYFKVRKLGSGAYGEVLLCREKHGHGEKAIKVIKKSQFDKMKYSITNKIECDDKIHEEIYNEISLLKSLDHPNIIKLFDVFEDKKYFYLVTEFYEGGELFEQIINRHKFDECDAANIMKQILSGICYLHKHNIVHRDIKPENILLENKHSLLNIKIVDFGLSSFFSKDNKLRDRLGTAYYIAPEVLRKKYNEKCDVWSCGVILYILLCGYPPFGGQNDQDIIKKVEKGKYYFDFNDWKNISEEAKELIKLMLTYDYNKRITAKEALNSKWIKKYANNINKSDQKTLCGALSNMRKFEGSQKLAQAAILFIGSKLTTLEERKELTDIFKKLDKNGDGQLDKKELIEGYNILRSFKNELGELKNVEEEVDNILKEVDFDKNGYIEYSEFISVCMDKQILFSEERLRDAFNLFDTDKSGKITKEELANLFGLTSISEQMWNEVLGEADKNKDNMIDFDEFVNMMHKICDNKSS.

A disordered region spans residues 1–34 (MGCSQSSNVKDFKTRRSKFTNGNNYGKSGNNKNS). The N-myristoyl glycine moiety is linked to residue Gly2. The S-palmitoyl cysteine moiety is linked to residue Cys3. The Basic cluster involved in membrane binding motif lies at 10-20 (KDFKTRRSKFT). A phosphoserine; by autocatalysis mark is found at Ser17, Ser28, and Ser34. Positions 21-32 (NGNNYGKSGNNK) are enriched in low complexity. Positions 56–325 (YFKVRKLGSG…AKEALNSKWI (270 aa)) constitute a Protein kinase domain. Residues 62–70 (LGSGAYGEV) and Lys85 contribute to the ATP site. Phosphoserine; by PKG; by autocatalysis is present on Ser64. Thr100 is subject to Phosphothreonine; by autocatalysis. Ser118 is subject to Phosphoserine; by autocatalysis. The active-site Proton acceptor is Asp191. Ser217 is modified (phosphoserine). At Ser220 the chain carries Phosphoserine; by autocatalysis. Thr231 is subject to Phosphothreonine; by PKG; by autocatalysis. Phosphoserine; by autocatalysis is present on Ser335. The J domain autoinhibitory motif signature appears at 346 to 353 (NMRKFEGS). The tract at residues 346-364 (NMRKFEGSQKLAQAAILFI) is j domain. The J domain interacts with the EF-hand domains signature appears at 354–364 (QKLAQAAILFI). EF-hand domains follow at residues 372–407 (EERK…LRSF), 416–451 (NVEE…KQIL), 452–487 (FSEE…TSIS), and 488–521 (EQMW…ICDN). Residues Asp385, Asn387, Asp389, Gln391, Glu396, Asp429, Asp431, Asn433, Tyr435, Glu440, Asp465, Asp467, Ser469, Lys471, Glu476, Asp499, Asn501, Asp503, Met505, and Glu510 each contribute to the Ca(2+) site.

It belongs to the protein kinase superfamily. Ser/Thr protein kinase family. CDPK subfamily. As to quaternary structure, monomer. Forms a high molecular weight (250 and 400 kDa) complex. Forms a complex composed of CDPK1, PKA regulatory subunit PKAr and 14-3-3I; the complex is formed in merozoites in response to low extracellular level of K(+) and may play a role in microneme secretion. Interacts (when phosphorylated) with 14-3-3I in a Ca(2+)-independent manner; the interaction does not regulate CDPK1 catalytic activity but is required for merozoite invasion of host erythrocytes. Interacts with PKA regulatory subunit PKAr; in a Ca(2+)-dependent manner. Interacts with SERA5 p50 in the late schizont stage. Interacts with inner membrane complex protein IMC1g in late schizonts. Interacts with rhoptry protein RhopH3 in merozoites. It depends on Mg(2+) as a cofactor. Myristoylated. Myristoylation, palmitoylation and the basic cluster motif are required for the localization to the parasitophorous vacuole membrane. In terms of processing, palmitoylated. Palmitoylation increases in merozoites in response to low level of extracellular K(+) in the host blood. Myristoylation, palmitoylation and the basic cluster motif are required for the localization to the parasitophorous vacuole membrane. Post-translationally, phosphorylation at Ser-64 occurs at late schizont stage and regulates CDPK1 protein-protein interaction. Phosphorylated at Ser-28, Ser-34 and Ser-64 in merozoites in response to low extracellular level of K(+). Phosphorylation at Thr-231 may regulate CDPK1 kinase activity. Phosphorylation increases in response to an increase in intracellular Ca(2+) levels. Autophosphorylated in vitro. Autophosphorylation does not affect membrane localization in vitro.

Its subcellular location is the membrane. It localises to the cell membrane. The protein resides in the parasitophorous vacuole membrane. The protein localises to the cytoplasm. It is found in the cell projection. Its subcellular location is the cilium. It localises to the flagellum. The protein resides in the host cell membrane. It carries out the reaction L-seryl-[protein] + ATP = O-phospho-L-seryl-[protein] + ADP + H(+). The catalysed reaction is L-threonyl-[protein] + ATP = O-phospho-L-threonyl-[protein] + ADP + H(+). With respect to regulation, activated by calcium. Upon calcium binding to the EF-hand domains, the C-terminus of the junction domain (J domain) undergoes a conformational change which results in the dissociation of the pseudo-substrate inhibitory motif from the catalytic domain. This, in turn may facilitate the autophosphorylation of the activation loop at Thr-231, which leads to the kinase activation. May be negatively regulated by PKA-mediated phosphorylation. Inhibited by purfalcamine. Its function is as follows. Calcium-dependent protein kinase which acts as a sensor and effector of intracellular Ca(2+) levels probably in part downstream of cGMP-activated PKG kinase. By phosphorylating various proteins, required for microneme secretion and thus merozoite egress from and invasion of host erythrocytes. During gametogenesis, essential for the development of both male and female gametes. Phosphorylates SERA5 p50 which enhances SERA5 p50 protease activity; however, SERA5 p50 protease activity has been shown in other studies to be controversial. Probably by phosphorylating SERA5 p50, plays a role in merozoite egress from host erythrocytes. Probably prior or during merozoite invasion of host erythrocytes, phosphorylates rhoptry protein RhopH3 which is required for RhopH3 localization to rhoptries and for its secretion. Probably in late schizonts, phosphorylates myosin A tail domain-interacting protein MTIP and glideosome-associated protein 45 GAP45, both of which are components of the motor complex that generates the force required by the parasite to invade host cells. In late schizonts, phosphorylates inner membrane complex protein IMC1g. In late schizonts, phosphorylates PKA regulatory subunit PKAr in a calcium-dependent manner, which may contribute to the dissociation of regulatory PKAr and catalytic PKAc subunits and promote the activation of PKAc. May phosphorylate raf kinase inhibitory protein RKIP which in turn may regulate CDPK1 catalytic activity. May phosphorylate proteins of the host erythrocyte membranes. This is Calcium-dependent protein kinase 1 from Plasmodium falciparum (isolate 3D7).